The sequence spans 154 residues: NADPH-dependent 7-cyano-7-deazaguanine reductase (154 aa).

A compositionally biased stretch (polar residues) spans Met1–Ser21. Residues Met1 to Val26 are disordered. Cys52 functions as the Thioimide intermediate in the catalytic mechanism. Catalysis depends on Asp59, which acts as the Proton donor. Residues Val74–Ser76 and His93–Glu94 each bind substrate.

It belongs to the GTP cyclohydrolase I family. QueF type 1 subfamily.

It localises to the cytoplasm. The enzyme catalyses 7-aminomethyl-7-carbaguanine + 2 NADP(+) = 7-cyano-7-deazaguanine + 2 NADPH + 3 H(+). It functions in the pathway tRNA modification; tRNA-queuosine biosynthesis. Its function is as follows. Catalyzes the NADPH-dependent reduction of 7-cyano-7-deazaguanine (preQ0) to 7-aminomethyl-7-deazaguanine (preQ1). The chain is NADPH-dependent 7-cyano-7-deazaguanine reductase from Rhizobium etli (strain ATCC 51251 / DSM 11541 / JCM 21823 / NBRC 15573 / CFN 42).